The sequence spans 202 residues: Dephospho-CoA kinase (202 aa).

The DPCK domain occupies 5 to 202 (IVGLTGGIAS…DADYRARANP (198 aa)). 13 to 18 (ASGKSA) is a binding site for ATP.

Belongs to the CoaE family.

The protein resides in the cytoplasm. The enzyme catalyses 3'-dephospho-CoA + ATP = ADP + CoA + H(+). The protein operates within cofactor biosynthesis; coenzyme A biosynthesis; CoA from (R)-pantothenate: step 5/5. Its function is as follows. Catalyzes the phosphorylation of the 3'-hydroxyl group of dephosphocoenzyme A to form coenzyme A. The chain is Dephospho-CoA kinase from Xanthomonas axonopodis pv. citri (strain 306).